We begin with the raw amino-acid sequence, 283 residues long: Nucleotide-binding protein Sama_3091 (283 aa).

Position 8–15 (8–15 (GRSGSGKS)) interacts with ATP. 56 to 59 (DIRN) serves as a coordination point for GTP.

The protein belongs to the RapZ-like family.

Functionally, displays ATPase and GTPase activities. This Shewanella amazonensis (strain ATCC BAA-1098 / SB2B) protein is Nucleotide-binding protein Sama_3091.